The following is a 427-amino-acid chain: Adenylosuccinate synthetase (427 aa).

Residues 12–18 (GDEGKGK) and 40–42 (GHT) contribute to the GTP site. Aspartate 13 serves as the catalytic Proton acceptor. Mg(2+)-binding residues include aspartate 13 and glycine 40. IMP is bound by residues 13–16 (DEGK), 38–41 (NAGH), threonine 127, arginine 141, glutamine 222, threonine 237, and arginine 301. The active-site Proton donor is the histidine 41. 297–303 (VVTKRPR) lines the substrate pocket. Residues arginine 303, 329 to 331 (SLD), and 411 to 413 (AVG) contribute to the GTP site.

This sequence belongs to the adenylosuccinate synthetase family. Homodimer. The cofactor is Mg(2+).

The protein localises to the cytoplasm. It carries out the reaction IMP + L-aspartate + GTP = N(6)-(1,2-dicarboxyethyl)-AMP + GDP + phosphate + 2 H(+). Its pathway is purine metabolism; AMP biosynthesis via de novo pathway; AMP from IMP: step 1/2. Functionally, plays an important role in the de novo pathway of purine nucleotide biosynthesis. Catalyzes the first committed step in the biosynthesis of AMP from IMP. The protein is Adenylosuccinate synthetase of Leuconostoc citreum (strain KM20).